Reading from the N-terminus, the 398-residue chain is MNYNKKSIEDIDVKGKKVLVRCDFNVPLNEGKITDENRLVGALPTIKYLMEKGAKIILCSHMGKPKGEPKKELSLLPVAKRLSEMLNKEVIFADDDNVVGENAKKAVEDMKDGDVVLLQNTRYRKEETKNEEVFSKELASLADVFVNDAFGTAHRAHCSTVGVTNYLKEAACGYLIQKELKFLGNAVEKPERPFVAILGGAKVSDKINVINNLLDKVDTLIIGGGMGYTFLKAQGYTIGNSLVEEDKVEYSKEMIDKAKEKGVNLLLPIDNVVADKFDKDASPVVTEDQNIGEGYMGLDIGPKTAKIYSDAIKSAKTVVWNGPMGVFEFKSFANGTIEVAKAMADSDAVTIIGGGDSAAAVNILGFGDNMTHISTGGGASLEFLEGKELPGIAALNDK.

Residues 23–25, Arg-38, 61–64, Arg-122, and Arg-155 each bind substrate; these read DFN and HMGK. ATP is bound by residues Lys-206, Gly-297, Glu-328, and 354–357; that span reads GGDS.

The protein belongs to the phosphoglycerate kinase family. In terms of assembly, monomer.

Its subcellular location is the cytoplasm. The catalysed reaction is (2R)-3-phosphoglycerate + ATP = (2R)-3-phospho-glyceroyl phosphate + ADP. It functions in the pathway carbohydrate degradation; glycolysis; pyruvate from D-glyceraldehyde 3-phosphate: step 2/5. This chain is Phosphoglycerate kinase, found in Clostridium botulinum (strain 657 / Type Ba4).